The sequence spans 471 residues: MTIAATALDYKVADISLAEWGRKEIDIAEKEMPGLMAIRNKYKGQKPLAGSRISGSLHMTIQTAVLIETLVELGADVRWASCNIFSTQDHAAAAIAVTGVPVFAWKGESLEEYWWCTRQILDFGNGLGPNLIVDDGGDATMMIILGYKVENNPSMFDKGGSNAEEKALFAQLKSIYDEDSTRWHKVAADMKGVSEETTTGVHRLYHMMEKGELLFPAINVNDSVTKSKFDNLYGCRESLADGIKRATDVMIAGKVAVVLGYGDVGKGCAHSMRSYGARVIVTEIDPICALQAAMEGFEVTTMDRAVKEGNIFVTTTGNKDVITLEHMKQMPDEAIVCNIGHFDNEIQVEPLNEYKGATKLNIKPQVDKYTFEDGHCIYMLAEGRLVNLGCATGHPSFVMSNSFTNQTLAQIELWKNDYEIGVYRLPKALDEEVARLHLEQIGVKLTTLSKEQADYIGVPVSGPYKPEHYRY.

Thr-60, Asp-135, and Glu-196 together coordinate substrate. 197 to 199 (TTT) contributes to the NAD(+) binding site. The substrate site is built by Lys-226 and Asp-230. Residues Asn-231, 260–265 (GYGDVG), Glu-283, Asn-318, 339–341 (IGH), and Asn-387 each bind NAD(+).

It belongs to the adenosylhomocysteinase family. The cofactor is NAD(+).

The protein localises to the cytoplasm. The enzyme catalyses S-adenosyl-L-homocysteine + H2O = L-homocysteine + adenosine. The protein operates within amino-acid biosynthesis; L-homocysteine biosynthesis; L-homocysteine from S-adenosyl-L-homocysteine: step 1/1. Functionally, may play a key role in the regulation of the intracellular concentration of adenosylhomocysteine. This Chlorobium phaeovibrioides (strain DSM 265 / 1930) (Prosthecochloris vibrioformis (strain DSM 265)) protein is Adenosylhomocysteinase.